Here is a 92-residue protein sequence, read N- to C-terminus: Conotoxin Ac8.1 (92 aa).

Residues 1–19 form the signal peptide; it reads LKMGAMFVLLLLFTLASSQ. A propeptide spanning residues 20–44 is cleaved from the precursor; it reads QEGDVQARKTSLKSDFYRALRQYDR. Residue Gln-45 is modified to Pyrrolidone carboxylic acid.

It belongs to the conotoxin S superfamily. In terms of processing, contains 5 disulfide bonds. In terms of tissue distribution, expressed by the venom duct.

Its subcellular location is the secreted. The chain is Conotoxin Ac8.1 from Conus achatinus (Little frog cone).